Reading from the N-terminus, the 99-residue chain is Nucleoid-associated protein UUR10_0100 (99 aa).

It belongs to the YbaB/EbfC family. In terms of assembly, homodimer.

The protein localises to the cytoplasm. Its subcellular location is the nucleoid. Its function is as follows. Binds to DNA and alters its conformation. May be involved in regulation of gene expression, nucleoid organization and DNA protection. The protein is Nucleoid-associated protein UUR10_0100 of Ureaplasma urealyticum serovar 10 (strain ATCC 33699 / Western).